We begin with the raw amino-acid sequence, 433 residues long: Glutamate-1-semialdehyde 2,1-aminomutase (433 aa).

The residue at position 271 (lysine 271) is an N6-(pyridoxal phosphate)lysine.

Belongs to the class-III pyridoxal-phosphate-dependent aminotransferase family. HemL subfamily. In terms of assembly, homodimer. Pyridoxal 5'-phosphate serves as cofactor.

Its subcellular location is the cytoplasm. The enzyme catalyses (S)-4-amino-5-oxopentanoate = 5-aminolevulinate. It participates in porphyrin-containing compound metabolism; protoporphyrin-IX biosynthesis; 5-aminolevulinate from L-glutamyl-tRNA(Glu): step 2/2. Its pathway is porphyrin-containing compound metabolism; chlorophyll biosynthesis. This chain is Glutamate-1-semialdehyde 2,1-aminomutase, found in Prochlorococcus marinus (strain SARG / CCMP1375 / SS120).